The chain runs to 340 residues: Deubiquitinase SseL (340 aa).

His-223 is an active-site residue. Cys-285 (nucleophile) is an active-site residue.

It belongs to the peptidase C79 family.

The protein localises to the secreted. The protein resides in the host cytoplasm. Effector proteins function to alter host cell physiology and promote bacterial survival in host tissues. This protease targets the host cell ubiquitin pathway by acting as a deubiquitinase in infected host cells. Specifically hydrolyzes mono- and polyubiquitin substrates in vitro with a preference for 'Lys-63'-linked ubiquitin chains, suggesting that it interferes with a signaling pathway rather than inhibiting proteasomal-dependent degradation of its targets. Does not possess desumoylating activity. Is required for the Salmonella-induced delayed cytotoxicity in macrophages and full virulence. Is not required for intracellular bacterial replication. This Salmonella typhimurium (strain LT2 / SGSC1412 / ATCC 700720) protein is Deubiquitinase SseL (sseL).